A 292-amino-acid polypeptide reads, in one-letter code: Protease HtpX (292 aa).

The next 2 helical transmembrane spans lie at 5-25 (VVLFLLTNFAVLILAGIVMSV) and 34-54 (SGLLVMAAIFGFGGSFISLLL). Histidine 140 contributes to the Zn(2+) binding site. The active site involves glutamate 141. A Zn(2+)-binding site is contributed by histidine 144. 2 helical membrane passes run 155–175 (LLQGVLNTFVIVLARVVGGII) and 193–213 (IIVFVLEMVFGLFATMIAMWF). Residue glutamate 218 coordinates Zn(2+).

It belongs to the peptidase M48B family. It depends on Zn(2+) as a cofactor.

It localises to the cell inner membrane. The chain is Protease HtpX from Xanthomonas campestris pv. campestris (strain B100).